A 238-amino-acid chain; its full sequence is Membrane protein 2 (238 aa).

This sequence belongs to the varicellovirus ORF2 protein family. Post-translationally, phosphorylated by host.

The protein resides in the host membrane. The sequence is that of Membrane protein 2 from Varicella-zoster virus (strain Dumas) (HHV-3).